Here is a 352-residue protein sequence, read N- to C-terminus: Gamma-aminobutyric acid-binding protein (352 aa).

Positions 1–28 (MFKSLHQYAHVFSRLSLFGLAFAAAAQA) are cleaved as a signal peptide.

This sequence belongs to the bacterial solute-binding protein 1 family.

It is found in the periplasm. Binds specifically gamma-aminobutyric acid (GABA) with nanomolar affinity. Does not bind structurally related compounds such as 4-aminovaleric acid, spermidine, histamine and butyric acid. This chain is Gamma-aminobutyric acid-binding protein, found in Pseudomonas aeruginosa (strain ATCC 15692 / DSM 22644 / CIP 104116 / JCM 14847 / LMG 12228 / 1C / PRS 101 / PAO1).